A 209-amino-acid chain; its full sequence is Large ribosomal subunit protein uL4 (209 aa).

The tract at residues arginine 45–serine 80 is disordered.

It belongs to the universal ribosomal protein uL4 family. Part of the 50S ribosomal subunit.

Its function is as follows. One of the primary rRNA binding proteins, this protein initially binds near the 5'-end of the 23S rRNA. It is important during the early stages of 50S assembly. It makes multiple contacts with different domains of the 23S rRNA in the assembled 50S subunit and ribosome. Forms part of the polypeptide exit tunnel. The polypeptide is Large ribosomal subunit protein uL4 (Porphyromonas gingivalis (strain ATCC BAA-308 / W83)).